The chain runs to 253 residues: 4-phosphopantoate--beta-alanine ligase (253 aa).

Residues Arg-17, Arg-39, 179 to 181 (DLN), 185 to 186 (RT), and 197 to 198 (NL) contribute to the ATP site.

The protein belongs to the archaeal phosphopantothenate synthetase family. In terms of assembly, homodimer.

It catalyses the reaction (R)-4-phosphopantoate + beta-alanine + ATP = (R)-4'-phosphopantothenate + AMP + diphosphate + H(+). It participates in cofactor biosynthesis; coenzyme A biosynthesis. Catalyzes the condensation of (R)-4-phosphopantoate and beta-alanine to 4'-phosphopantothenate in the CoA biosynthesis pathway. This chain is 4-phosphopantoate--beta-alanine ligase, found in Methanosarcina mazei (strain ATCC BAA-159 / DSM 3647 / Goe1 / Go1 / JCM 11833 / OCM 88) (Methanosarcina frisia).